The sequence spans 491 residues: MANYFNTLNLRQQLAQLGKCRFMGRDEFADGASYLQGKKVVIVGCGAQGLNQGLNMRDSGLDISYALRKEAIAEKRASWRKATENGFKVGTYEELIPQADLVVNLTPDKQHSDVVRTVQPLMKDGAALGYSHGFNIVEVGEQIRKDITVVMVAPKCPGTEVREEYKRGFGVPTLIAVHPENDPKGEGMAIAKAWAAATGGHRAGVLESSFVAEVKSDLMGEQTILCGMLQAGSLLCFDKLVEEGTDPAYAEKLIQFGWETITEALKQGGITLMMDRLSNPAKLRAYALSEQLKEIMAPLFQKHMDDIISGEFSSGMMADWANDDKKLLTWREETGKTAFETAPQYEGKIGEQEYFDKGVLMIAMVKAGVELAFETMVDSGIIEESAYYESLHELPLIANTIARKRLYEMNVVISDTAEYGNYLFSYACVPLLKPFMAELQPGDLGKAIPEGAVDNAQLRDVNEAIRCHAIEQVGKKLRGYMTDMKRIAVAG.

Positions 15–208 constitute a KARI N-terminal Rossmann domain; sequence AQLGKCRFMG…GGHRAGVLES (194 aa). Residues 45 to 48, Arg-68, Arg-76, Ser-78, and 108 to 110 contribute to the NADP(+) site; these read CGAQ and DKQ. The active site involves His-132. NADP(+) is bound at residue Gly-158. KARI C-terminal knotted domains follow at residues 209 to 344 and 345 to 484; these read SFVA…TAPQ and YEGK…MTDM. Mg(2+) is bound by residues Asp-217, Glu-221, Glu-389, and Glu-393. A substrate-binding site is contributed by Ser-414.

It belongs to the ketol-acid reductoisomerase family. The cofactor is Mg(2+).

The enzyme catalyses (2R)-2,3-dihydroxy-3-methylbutanoate + NADP(+) = (2S)-2-acetolactate + NADPH + H(+). The catalysed reaction is (2R,3R)-2,3-dihydroxy-3-methylpentanoate + NADP(+) = (S)-2-ethyl-2-hydroxy-3-oxobutanoate + NADPH + H(+). It participates in amino-acid biosynthesis; L-isoleucine biosynthesis; L-isoleucine from 2-oxobutanoate: step 2/4. It functions in the pathway amino-acid biosynthesis; L-valine biosynthesis; L-valine from pyruvate: step 2/4. Functionally, involved in the biosynthesis of branched-chain amino acids (BCAA). Catalyzes an alkyl-migration followed by a ketol-acid reduction of (S)-2-acetolactate (S2AL) to yield (R)-2,3-dihydroxy-isovalerate. In the isomerase reaction, S2AL is rearranged via a Mg-dependent methyl migration to produce 3-hydroxy-3-methyl-2-ketobutyrate (HMKB). In the reductase reaction, this 2-ketoacid undergoes a metal-dependent reduction by NADPH to yield (R)-2,3-dihydroxy-isovalerate. The chain is Ketol-acid reductoisomerase (NADP(+)) from Escherichia coli O8 (strain IAI1).